The primary structure comprises 295 residues: Sperm acrosome membrane-associated protein 1 (295 aa).

The N-terminal stretch at 1–29 is a signal peptide; the sequence is MSPGGAGCSAGLLLTVGWLLLAGLQSTCG. Residues 30 to 220 lie on the Extracellular side of the membrane; that stretch reads INVTAVQDPS…SRPDTDAVLV (191 aa). A disordered region spans residues 39 to 71; that stretch reads SLVSEGENEGEEEAENDSEVENEPQAEAEQDVS. The segment covering 44-68 has biased composition (acidic residues); the sequence is GENEGEEEAENDSEVENEPQAEAEQ. Residue Asn72 is glycosylated (N-linked (GlcNAc...) asparagine). Residues 221 to 241 form a helical membrane-spanning segment; that stretch reads FVLTIGVIICIFVIFVLIFII. The Cytoplasmic portion of the chain corresponds to 242–295; it reads VNWATVKDFWASKASTTEIQSELSSMKYKDSTSLDQSPTEIPGHEDDALSEWNE. Ser256 carries the post-translational modification Phosphoserine. Positions 263–295 are disordered; it reads ELSSMKYKDSTSLDQSPTEIPGHEDDALSEWNE. Residue Tyr269 is modified to Phosphotyrosine. A phosphoserine mark is found at Ser278 and Ser291.

Interacts with CYLC1; the interaction may be relevant for proper acrosome attachment to the nuclear envelope. N-glycosylated. Detected in spermatozoa (at protein level).

It is found in the cytoplasmic vesicle. It localises to the secretory vesicle. The protein resides in the acrosome inner membrane. Plays a role in acrosome expansion and establishment of normal sperm morphology during spermatogenesis. Important for male fertility. The sequence is that of Sperm acrosome membrane-associated protein 1 from Sus scrofa (Pig).